Here is a 443-residue protein sequence, read N- to C-terminus: Tryptophan synthase beta chain (443 aa).

K110 is modified (N6-(pyridoxal phosphate)lysine).

This sequence belongs to the TrpB family. In terms of assembly, tetramer of two alpha and two beta chains. The cofactor is pyridoxal 5'-phosphate.

The enzyme catalyses (1S,2R)-1-C-(indol-3-yl)glycerol 3-phosphate + L-serine = D-glyceraldehyde 3-phosphate + L-tryptophan + H2O. It functions in the pathway amino-acid biosynthesis; L-tryptophan biosynthesis; L-tryptophan from chorismate: step 5/5. The beta subunit is responsible for the synthesis of L-tryptophan from indole and L-serine. In Thermococcus onnurineus (strain NA1), this protein is Tryptophan synthase beta chain.